A 122-amino-acid polypeptide reads, in one-letter code: Acidic phospholipase A2 5 (122 aa).

7 disulfides stabilise this stretch: cysteine 26/cysteine 115, cysteine 28/cysteine 44, cysteine 43/cysteine 95, cysteine 49/cysteine 122, cysteine 50/cysteine 88, cysteine 57/cysteine 81, and cysteine 75/cysteine 86. Positions 27, 29, and 31 each coordinate Ca(2+). Residue histidine 47 is part of the active site. Residue aspartate 48 participates in Ca(2+) binding. Aspartate 89 is a catalytic residue.

The protein belongs to the phospholipase A2 family. Group II subfamily. D49 sub-subfamily. In terms of assembly, monomer (predominant). Non-covalently linked homodimers are also observed. Ca(2+) is required as a cofactor. Expressed by the venom gland.

The protein localises to the secreted. It carries out the reaction a 1,2-diacyl-sn-glycero-3-phosphocholine + H2O = a 1-acyl-sn-glycero-3-phosphocholine + a fatty acid + H(+). With respect to regulation, preincubation with heparin slightly increase the enzymatic activity. Snake venom phospholipase A2 (PLA2) that inhibits platelet aggregation induced by ADP, arachidonic acid and PAF. Acts in a enzymatic independent manner on a proteinase-activated receptor (PAR1, F2R) to evoke calcium release through the inositol 1,4,5-trisphosphate receptor (ITPR1, IP3R) and induces mouse aorta contraction. PAR1, phospholipase C and IP3R inhibitors suppress PA2-induced aorta contraction. PLA2 catalyzes the calcium-dependent hydrolysis of the 2-acyl groups in 3-sn-phosphoglycerides. The protein is Acidic phospholipase A2 5 of Trimeresurus stejnegeri (Chinese green tree viper).